Consider the following 461-residue polypeptide: Ribitol-5-phosphate transferase FKTN (461 aa).

Residues M1 to N7 are Cytoplasmic-facing. Positions K6–Y27 are required and sufficient for interaction with POMGNT1. A helical; Signal-anchor for type II membrane protein transmembrane segment spans residues V8–Y28. The Lumenal segment spans residues K29–Y461. An N-linked (GlcNAc...) asparagine glycan is attached at N92.

Belongs to the LicD transferase family. In terms of assembly, forms a complex composed of FKTN/fukutin, FKRP and RXYLT1/TMEM5. Interacts (via transmembrane domain) with POMGNT1; the interaction is direct and is required for normal POMGNT1 location in Golgi membranes. In terms of tissue distribution, expressed in the retina (at protein level). Widely expressed with highest expression in brain, heart, pancreas and skeletal muscle. Expressed at similar levels in control fetal and adult brain. Expressed in migrating neurons, including Cajar-Retzius cells and adult cortical neurons, as well as hippocampal pyramidal cells and cerebellar Purkinje cells. No expression observed in the glia limitans, the subpial astrocytes (which contribute to basement membrane formation) or other glial cells.

It localises to the golgi apparatus membrane. It is found in the cytoplasm. The protein resides in the nucleus. It carries out the reaction 3-O-[beta-D-GalNAc-(1-&gt;3)-beta-D-GlcNAc-(1-&gt;4)-(O-6-P-alpha-D-Man)]-Thr-[protein] + CDP-L-ribitol = 3-O-[Rib-ol-P-3-beta-D-GalNAc-(1-&gt;3)-beta-D-GlcNAc-(1-&gt;4)-(O-6-P-alpha-D-Man)]-Thr-[protein] + CMP + H(+). It functions in the pathway protein modification; protein glycosylation. In terms of biological role, catalyzes the transfer of a ribitol-phosphate from CDP-ribitol to the distal N-acetylgalactosamine of the phosphorylated O-mannosyl trisaccharide (N-acetylgalactosamine-beta-3-N-acetylglucosamine-beta-4-(phosphate-6-)mannose), a carbohydrate structure present in alpha-dystroglycan (DAG1). This constitutes the first step in the formation of the ribitol 5-phosphate tandem repeat which links the phosphorylated O-mannosyl trisaccharide to the ligand binding moiety composed of repeats of 3-xylosyl-alpha-1,3-glucuronic acid-beta-1. Required for normal location of POMGNT1 in Golgi membranes, and for normal POMGNT1 activity. May interact with and reinforce a large complex encompassing the outside and inside of muscle membranes. Could be involved in brain development. This chain is Ribitol-5-phosphate transferase FKTN, found in Homo sapiens (Human).